Reading from the N-terminus, the 291-residue chain is MANSQVAEKEKLDAQTNNQDSVATIVTTENNKKNTIPDSEKKIVYSTQNLDLWYGENHALQNINLDILENNVTAIIGPSGCGKSTYIKALNRMVELVPSVKTAGKILYRDQNIFDAKYSKEKLRTNVGMVFQQPNPFPKSIYDNITYGPKTHGIKNKKILDEIVEKSLRGAAIWDELKDRLHTNAYGLSGGQQQRVCIARCLAIEPDVILMDEPTSALDPISTLRVEELVQELKENYSIIMVTHNMQQAARVSDKTAFFLNGYVNEYDDTDKIFSNPADKQTEDYISGRFG.

Positions Tyr-45–Ile-286 constitute an ABC transporter domain. Position 77-84 (Gly-77–Ser-84) interacts with ATP.

The protein belongs to the ABC transporter superfamily. Phosphate importer (TC 3.A.1.7) family. The complex is composed of two ATP-binding proteins (PstB), two transmembrane proteins (PstC and PstA) and a solute-binding protein (PstS).

Its subcellular location is the cell membrane. The enzyme catalyses phosphate(out) + ATP + H2O = ADP + 2 phosphate(in) + H(+). Part of the ABC transporter complex PstSACB involved in phosphate import. Responsible for energy coupling to the transport system. This Staphylococcus epidermidis (strain ATCC 12228 / FDA PCI 1200) protein is Phosphate import ATP-binding protein PstB.